The sequence spans 172 residues: Small ribosomal subunit protein uS5 (172 aa).

One can recognise an S5 DRBM domain in the interval 16–79; that stretch reads LKEKLVHINR…EDGKKNVIKV (64 aa).

Belongs to the universal ribosomal protein uS5 family. Part of the 30S ribosomal subunit. Contacts proteins S4 and S8.

Its function is as follows. With S4 and S12 plays an important role in translational accuracy. In terms of biological role, located at the back of the 30S subunit body where it stabilizes the conformation of the head with respect to the body. This chain is Small ribosomal subunit protein uS5, found in Pelodictyon phaeoclathratiforme (strain DSM 5477 / BU-1).